Consider the following 684-residue polypeptide: Ski-like protein (684 aa).

Glycyl lysine isopeptide (Lys-Gly) (interchain with G-Cter in SUMO2) cross-links involve residues Lys50 and Lys70. The disordered stretch occupies residues Ser420–Pro454. Ser452 carries the post-translational modification Phosphoserine. Residues Lys489 and Lys527 each participate in a glycyl lysine isopeptide (Lys-Gly) (interchain with G-Cter in SUMO2) cross-link. The stretch at Arg536 to Glu684 forms a coiled coil.

Belongs to the SKI family. As to quaternary structure, interacts with CPNE4 (via VWFA domain). Interacts with SMAD2, SMAD3 and RNF111. Isoform 1 interacts with WWP1. Post-translationally, ubiquitinated by RNF111 and ARK2C, promoting proteasomal degradation, leading to enhance the BMP-Smad signaling. In terms of tissue distribution, isoform SNON and isoform SNOA are widely expressed. Highest expression is found in skeletal muscle, followed by placenta and lung. Lowest expression in heart, brain and pancreas. Isoform SNOI expression is restricted to skeletal muscle.

Functionally, may have regulatory role in cell division or differentiation in response to extracellular signals. This Homo sapiens (Human) protein is Ski-like protein (SKIL).